We begin with the raw amino-acid sequence, 472 residues long: RING-H2 finger protein ATL13 (472 aa).

A helical transmembrane segment spans residues 51 to 71 (ILLIIIILSIIFFISGLLHLL). The segment at 134–176 (CAVCLCEFETEDKLRLLPKCSHAFHMDCIDTWLLSHSTCPLCR) adopts an RING-type; atypical zinc-finger fold. The segment at 320–340 (VSTKKQSSKNRGLPGHRTAMS) is disordered.

The protein belongs to the RING-type zinc finger family. ATL subfamily.

It is found in the membrane. It catalyses the reaction S-ubiquitinyl-[E2 ubiquitin-conjugating enzyme]-L-cysteine + [acceptor protein]-L-lysine = [E2 ubiquitin-conjugating enzyme]-L-cysteine + N(6)-ubiquitinyl-[acceptor protein]-L-lysine.. Its pathway is protein modification; protein ubiquitination. This Arabidopsis thaliana (Mouse-ear cress) protein is RING-H2 finger protein ATL13 (ATL13).